The primary structure comprises 45 residues: Large ribosomal subunit protein bL34 (45 aa).

Positions 1 to 10 are enriched in basic and acidic residues; sequence MTKRTLEGTN. Residues 1 to 27 are disordered; that stretch reads MTKRTLEGTNRKRKRTSGFRARMRSAT. Positions 11–23 are enriched in basic residues; the sequence is RKRKRTSGFRARM.

Belongs to the bacterial ribosomal protein bL34 family.

This Synechococcus elongatus (strain ATCC 33912 / PCC 7942 / FACHB-805) (Anacystis nidulans R2) protein is Large ribosomal subunit protein bL34.